We begin with the raw amino-acid sequence, 101 residues long: uncharacterized protein (101 aa).

This is an uncharacterized protein from Cupriavidus necator (strain ATCC 17699 / DSM 428 / KCTC 22496 / NCIMB 10442 / H16 / Stanier 337) (Ralstonia eutropha).